Reading from the N-terminus, the 543-residue chain is Germacrene A synthase (543 aa).

Positions 296, 300, 439, and 447 each coordinate Mg(2+). The DDXXD motif motif lies at 296 to 300 (DDTYD).

Belongs to the terpene synthase family. Tpsa subfamily. Requires Mg(2+) as cofactor. The cofactor is Mn(2+). Barely detectable in leaves.

It localises to the plastid. The protein resides in the chloroplast. It catalyses the reaction (2E,6E)-farnesyl diphosphate = germacrene A + diphosphate. The catalysed reaction is (2E,6E)-farnesyl diphosphate = (1S,2S,4R)-beta-elemene + diphosphate. The protein operates within secondary metabolite biosynthesis; terpenoid biosynthesis. Sesquiterpene synthase involved in the biosynthesis of volatile compounds widely used in aromatherapy and folk medicine, and present in culinary herbs. Mediates the conversion of (2E,6E)-farnesyl diphosphate (FPP) into germacrene A and beta-elemene. Not able to use (2E)-geranyl diphosphate (GPP) as substrate. This chain is Germacrene A synthase, found in Lavandula viridis (Green lavender).